The chain runs to 212 residues: Mediator of RNA polymerase II transcription subunit 20 (212 aa).

It belongs to the Mediator complex subunit 20 family. As to quaternary structure, interacts with PPARG. Component of the Mediator complex, which is composed of MED1, MED4, MED6, MED7, MED8, MED9, MED10, MED11, MED12, MED13, MED13L, MED14, MED15, MED16, MED17, MED18, MED19, MED20, MED21, MED22, MED23, MED24, MED25, MED26, MED27, MED29, MED30, MED31, CCNC, CDK8 and CDC2L6/CDK11. The MED12, MED13, CCNC and CDK8 subunits form a distinct module termed the CDK8 module. Mediator containing the CDK8 module is less active than Mediator lacking this module in supporting transcriptional activation. Individual preparations of the Mediator complex lacking one or more distinct subunits have been variously termed ARC, CRSP, DRIP, PC2, SMCC and TRAP.

It localises to the nucleus. Component of the Mediator complex, a coactivator involved in the regulated transcription of nearly all RNA polymerase II-dependent genes. Mediator functions as a bridge to convey information from gene-specific regulatory proteins to the basal RNA polymerase II transcription machinery. Mediator is recruited to promoters by direct interactions with regulatory proteins and serves as a scaffold for the assembly of a functional preinitiation complex with RNA polymerase II and the general transcription factors. The sequence is that of Mediator of RNA polymerase II transcription subunit 20 (MED20) from Homo sapiens (Human).